A 508-amino-acid chain; its full sequence is Probable malate:quinone oxidoreductase (508 aa).

Belongs to the MQO family. It depends on FAD as a cofactor.

It catalyses the reaction (S)-malate + a quinone = a quinol + oxaloacetate. It participates in carbohydrate metabolism; tricarboxylic acid cycle; oxaloacetate from (S)-malate (quinone route): step 1/1. This is Probable malate:quinone oxidoreductase from Chromohalobacter salexigens (strain ATCC BAA-138 / DSM 3043 / CIP 106854 / NCIMB 13768 / 1H11).